The following is a 337-amino-acid chain: Inositol 2-dehydrogenase (337 aa).

Belongs to the Gfo/Idh/MocA family. As to quaternary structure, homotetramer.

The catalysed reaction is myo-inositol + NAD(+) = scyllo-inosose + NADH + H(+). Involved in the oxidation of myo-inositol (MI) to 2-keto-myo-inositol (2KMI or 2-inosose). The protein is Inositol 2-dehydrogenase of Burkholderia multivorans (strain ATCC 17616 / 249).